The primary structure comprises 323 residues: Aspartate carbamoyltransferase catalytic subunit (323 aa).

Carbamoyl phosphate is bound by residues R71 and T72. K99 serves as a coordination point for L-aspartate. Carbamoyl phosphate-binding residues include R121, H151, and Q154. L-aspartate-binding residues include R184 and R239. Residues G280 and P281 each contribute to the carbamoyl phosphate site.

This sequence belongs to the aspartate/ornithine carbamoyltransferase superfamily. ATCase family. As to quaternary structure, heterododecamer (2C3:3R2) of six catalytic PyrB chains organized as two trimers (C3), and six regulatory PyrI chains organized as three dimers (R2).

It carries out the reaction carbamoyl phosphate + L-aspartate = N-carbamoyl-L-aspartate + phosphate + H(+). It participates in pyrimidine metabolism; UMP biosynthesis via de novo pathway; (S)-dihydroorotate from bicarbonate: step 2/3. Functionally, catalyzes the condensation of carbamoyl phosphate and aspartate to form carbamoyl aspartate and inorganic phosphate, the committed step in the de novo pyrimidine nucleotide biosynthesis pathway. The protein is Aspartate carbamoyltransferase catalytic subunit of Ralstonia pickettii (strain 12J).